The following is a 69-amino-acid chain: Large ribosomal subunit protein bL31 (69 aa).

Zn(2+) is bound by residues Cys-16, Cys-18, Cys-36, and Cys-39.

This sequence belongs to the bacterial ribosomal protein bL31 family. Type A subfamily. In terms of assembly, part of the 50S ribosomal subunit. Requires Zn(2+) as cofactor.

Its function is as follows. Binds the 23S rRNA. The protein is Large ribosomal subunit protein bL31 of Kosmotoga olearia (strain ATCC BAA-1733 / DSM 21960 / TBF 19.5.1).